Consider the following 227-residue polypeptide: KH domain-containing protein MJ0443 (227 aa).

2 KH domains span residues Lys14–Val77 and Asp106–Val163.

The protein is KH domain-containing protein MJ0443 of Methanocaldococcus jannaschii (strain ATCC 43067 / DSM 2661 / JAL-1 / JCM 10045 / NBRC 100440) (Methanococcus jannaschii).